A 447-amino-acid polypeptide reads, in one-letter code: UPF0210 protein OEOE_0945 (447 aa).

Belongs to the UPF0210 family. In terms of assembly, homodimer.

In Oenococcus oeni (strain ATCC BAA-331 / PSU-1), this protein is UPF0210 protein OEOE_0945.